The chain runs to 437 residues: Replication factor C large subunit (437 aa).

An ATP-binding site is contributed by 48–55 (GPPGVGKT). The tract at residues 410-437 (TQASKPTSEEKAEKSKKYYPKRSSSRKT) is disordered. A compositionally biased stretch (basic and acidic residues) spans 416–425 (TSEEKAEKSK). The segment covering 426–437 (KYYPKRSSSRKT) has biased composition (basic residues).

The protein belongs to the activator 1 small subunits family. RfcL subfamily. In terms of assembly, heteromultimer composed of small subunits (RfcS) and large subunits (RfcL).

Functionally, part of the RFC clamp loader complex which loads the PCNA sliding clamp onto DNA. This chain is Replication factor C large subunit, found in Sulfolobus acidocaldarius (strain ATCC 33909 / DSM 639 / JCM 8929 / NBRC 15157 / NCIMB 11770).